A 129-amino-acid chain; its full sequence is MAKEATRVKRRERKNIASGVAHVNASFNNTMITITDAQGNTISWSSAGAMGFKGSRKSTPYAAQVAAEDAARKAAEHGMRTLEVEVSGPGSGRESALRALQAAGFLVTSIRDVTPIPHNGCRPRKRRRV.

Belongs to the universal ribosomal protein uS11 family. As to quaternary structure, part of the 30S ribosomal subunit. Interacts with proteins S7 and S18. Binds to IF-3.

Functionally, located on the platform of the 30S subunit, it bridges several disparate RNA helices of the 16S rRNA. Forms part of the Shine-Dalgarno cleft in the 70S ribosome. This Xanthobacter autotrophicus (strain ATCC BAA-1158 / Py2) protein is Small ribosomal subunit protein uS11.